The following is a 99-amino-acid chain: Large ribosomal subunit protein uL23 (99 aa).

As to quaternary structure, contacts protein L29, and trigger factor when it is bound to the ribosome. Part of the 50S ribosomal subunit.

In terms of biological role, one of the early assembly proteins it binds 23S rRNA. One of the proteins that surrounds the polypeptide exit tunnel on the outside of the ribosome. Forms the main docking site for trigger factor binding to the ribosome. The chain is Large ribosomal subunit protein uL23 from Rhodopseudomonas palustris (strain ATCC BAA-98 / CGA009).